The chain runs to 345 residues: Probable 3'(2'),5'-bisphosphate nucleotidase 4 (345 aa).

Aspartate 46 acts as the Proton acceptor in catalysis. Residues glutamate 71, aspartate 134, valine 136, and aspartate 137 each coordinate Mg(2+). Residue threonine 139 is the Proton acceptor of the active site. 4 residues coordinate adenosine 3',5'-bisphosphate: threonine 139, serine 247, lysine 250, and arginine 264. AMP contacts are provided by serine 247, lysine 250, and arginine 264.

This sequence belongs to the inositol monophosphatase superfamily. It depends on Mg(2+) as a cofactor.

It carries out the reaction 3'-phosphoadenylyl sulfate + H2O = adenosine 5'-phosphosulfate + phosphate. It catalyses the reaction adenosine 3',5'-bisphosphate + H2O = AMP + phosphate. The enzyme catalyses adenosine 2',5'-bisphosphate + H2O = AMP + phosphate. The catalysed reaction is 1D-myo-inositol 1,4-bisphosphate + H2O = 1D-myo-inositol 4-phosphate + phosphate. It carries out the reaction 1D-myo-inositol 1,3,4-trisphosphate + H2O = 1D-myo-inositol 3,4-bisphosphate + phosphate. It participates in signal transduction; phosphatidylinositol signaling pathway. Phosphatase that converts adenosine 3'-phosphate 5'-phosphosulfate (PAPS) to adenosine 5'-phosphosulfate (APS) and 3'(2')-phosphoadenosine 5'-phosphate (PAP) to AMP. Is also able to hydrolyze inositol 1,4-bisphosphate and inositol 1,3,4-trisphosphate. In Arabidopsis thaliana (Mouse-ear cress), this protein is Probable 3'(2'),5'-bisphosphate nucleotidase 4 (SAL4).